The chain runs to 453 residues: Plasmepsin II (453 aa).

At 1 to 37 (MDITVREHDFKHGFIKSNSTFDGLNIDNSKNKKKIQK) the chain is on the cytoplasmic side. Residues 1 to 124 (MDITVREHDF…SGLTKTNYLG (124 aa)) constitute a propeptide that is removed on maturation. A helical; Signal-anchor for type II membrane protein membrane pass occupies residues 38-58 (GFQILYVLLFCSVMCGLFYYV). Residues 59–453 (YENVWLQRDN…VGIALAKKNL (395 aa)) lie on the Lumenal side of the membrane. Positions 140 to 447 (FYGDAEVGDN…DYDNHSVGIA (308 aa)) constitute a Peptidase A1 domain. Residue aspartate 158 is part of the active site. The cysteines at positions 171 and 176 are disulfide-linked. Aspartate 338 is a catalytic residue. Residues cysteine 373 and cysteine 409 are joined by a disulfide bond.

It belongs to the peptidase A1 family. Component of the hemozoin formation complex (HFC) composed of falcipains FP2A and/or FP2B, plasmepsins PMII, PMIII/HAP and PMIV, heme detoxifying protein HDP and falcilysin FLN. The HFC complex is involved in hemoglobin degradation and detoxification of heme in the food vacuole during the asexual blood stage. Not N-glycosylated. In terms of processing, proteolytically cleaved into the soluble active mature form in the digestive vacuole by cysteine protease falcipains; the process begins at the early ring stage. Proteolysis requires an acidic environment. In absence of falcipains, autoprocessing may serve as an alternate activation system.

It is found in the membrane. Its subcellular location is the vacuole lumen. The protein resides in the vacuole membrane. The enzyme catalyses Hydrolysis of the bonds linking certain hydrophobic residues in hemoglobin or globin. Also cleaves small molecules substrates such as Ala-Leu-Glu-Arg-Thr-Phe-|-Phe(NO2)-Ser-Phe-Pro-Thr.. Its activity is regulated as follows. Inhibited by pepstatin A. Functionally, during the asexual blood stage, participates in initial cleavage of native host hemoglobin (Hb) resulting in Hb denaturation. May cleave preferentially denatured hemoglobin that has been cleaved by PMI. Digestion of host Hb is an essential step which provides the parasite with amino acids for protein synthesis, and regulates osmolarity. This chain is Plasmepsin II, found in Plasmodium falciparum (isolate HB3).